A 283-amino-acid polypeptide reads, in one-letter code: Pantothenate synthetase (283 aa).

30–37 (MGFLHEGH) contacts ATP. The Proton donor role is filled by H37. (R)-pantoate is bound at residue Q61. Position 61 (Q61) interacts with beta-alanine. Residue 147-150 (GKKD) coordinates ATP. Q153 contributes to the (R)-pantoate binding site. Residues V176 and 184–187 (MSSR) contribute to the ATP site.

This sequence belongs to the pantothenate synthetase family. As to quaternary structure, homodimer.

Its subcellular location is the cytoplasm. The catalysed reaction is (R)-pantoate + beta-alanine + ATP = (R)-pantothenate + AMP + diphosphate + H(+). The protein operates within cofactor biosynthesis; (R)-pantothenate biosynthesis; (R)-pantothenate from (R)-pantoate and beta-alanine: step 1/1. In terms of biological role, catalyzes the condensation of pantoate with beta-alanine in an ATP-dependent reaction via a pantoyl-adenylate intermediate. This Trichlorobacter lovleyi (strain ATCC BAA-1151 / DSM 17278 / SZ) (Geobacter lovleyi) protein is Pantothenate synthetase.